The sequence spans 77 residues: Envelope protein US9 homolog (77 aa).

A Di-leucine internalization motif motif is present at residues 12–13; sequence LL.

This sequence belongs to the alphaherpesvirinae envelope protein US9 family.

The protein is Envelope protein US9 homolog of Chlorocebus aethiops (Green monkey).